Reading from the N-terminus, the 604-residue chain is Glutamine--fructose-6-phosphate aminotransferase [isomerizing] (604 aa).

Catalysis depends on Cys2, which acts as the Nucleophile; for GATase activity. The 217-residue stretch at 2-218 (CGIVGVVGNR…DKELVILTKD (217 aa)) folds into the Glutamine amidotransferase type-2 domain. 2 consecutive SIS domains span residues 284–423 (IITS…ANGK) and 456–594 (VQAL…VDKP). Residue Lys599 is the For Fru-6P isomerization activity of the active site.

As to quaternary structure, homodimer.

Its subcellular location is the cytoplasm. It carries out the reaction D-fructose 6-phosphate + L-glutamine = D-glucosamine 6-phosphate + L-glutamate. Functionally, catalyzes the first step in hexosamine metabolism, converting fructose-6P into glucosamine-6P using glutamine as a nitrogen source. The sequence is that of Glutamine--fructose-6-phosphate aminotransferase [isomerizing] from Streptococcus pyogenes serotype M18 (strain MGAS8232).